A 388-amino-acid chain; its full sequence is Succinate--CoA ligase [ADP-forming] subunit beta (388 aa).

One can recognise an ATP-grasp domain in the interval 9 to 244 (KQLFAEYGLP…PSQDDAREAH (236 aa)). Residues Lys-46, 53 to 55 (GRG), Glu-99, Thr-102, and Glu-107 contribute to the ATP site. Mg(2+) contacts are provided by Asn-199 and Asp-213. Residues Asn-264 and 321–323 (GIV) each bind substrate.

It belongs to the succinate/malate CoA ligase beta subunit family. Heterotetramer of two alpha and two beta subunits. Mg(2+) serves as cofactor.

It catalyses the reaction succinate + ATP + CoA = succinyl-CoA + ADP + phosphate. The enzyme catalyses GTP + succinate + CoA = succinyl-CoA + GDP + phosphate. Its pathway is carbohydrate metabolism; tricarboxylic acid cycle; succinate from succinyl-CoA (ligase route): step 1/1. Functionally, succinyl-CoA synthetase functions in the citric acid cycle (TCA), coupling the hydrolysis of succinyl-CoA to the synthesis of either ATP or GTP and thus represents the only step of substrate-level phosphorylation in the TCA. The beta subunit provides nucleotide specificity of the enzyme and binds the substrate succinate, while the binding sites for coenzyme A and phosphate are found in the alpha subunit. In Pseudomonas aeruginosa (strain UCBPP-PA14), this protein is Succinate--CoA ligase [ADP-forming] subunit beta.